Reading from the N-terminus, the 467-residue chain is Protein arginine methyltransferase NDUFAF7 homolog, mitochondrial (467 aa).

This sequence belongs to the NDUFAF7 family.

It is found in the mitochondrion. It catalyses the reaction L-arginyl-[protein] + 2 S-adenosyl-L-methionine = N(omega),N(omega)'-dimethyl-L-arginyl-[protein] + 2 S-adenosyl-L-homocysteine + 2 H(+). Functionally, arginine methyltransferase involved in the assembly or stability of mitochondrial NADH:ubiquinone oxidoreductase complex (complex I). In Schizosaccharomyces pombe (strain 972 / ATCC 24843) (Fission yeast), this protein is Protein arginine methyltransferase NDUFAF7 homolog, mitochondrial.